A 405-amino-acid chain; its full sequence is Magnesium-protoporphyrin IX monomethyl ester [oxidative] cyclase, chloroplastic (405 aa).

A chloroplast-targeting transit peptide spans Met1–Lys43.

Belongs to the AcsF family. Requires Fe cation as cofactor.

It is found in the plastid. It localises to the chloroplast. The catalysed reaction is Mg-protoporphyrin IX 13-monomethyl ester + 3 NADPH + 3 O2 + 2 H(+) = 3,8-divinyl protochlorophyllide a + 3 NADP(+) + 5 H2O. It functions in the pathway porphyrin-containing compound metabolism; chlorophyll biosynthesis. Catalyzes the formation of the isocyclic ring in chlorophyll biosynthesis. Mediates the cyclase reaction, which results in the formation of divinylprotochlorophyllide (Pchlide) characteristic of all chlorophylls from magnesium-protoporphyrin IX 13-monomethyl ester (MgPMME). The polypeptide is Magnesium-protoporphyrin IX monomethyl ester [oxidative] cyclase, chloroplastic (CRD1) (Gossypium hirsutum (Upland cotton)).